A 109-amino-acid polypeptide reads, in one-letter code: Beta-keratin-related protein (109 aa).

Residue S2 is modified to N-acetylserine.

Belongs to the avian keratin family.

This Coturnix japonica (Japanese quail) protein is Beta-keratin-related protein (BKJ).